The sequence spans 196 residues: Large ribosomal subunit protein bL25 (196 aa).

It belongs to the bacterial ribosomal protein bL25 family. CTC subfamily. In terms of assembly, part of the 50S ribosomal subunit; part of the 5S rRNA/L5/L18/L25 subcomplex. Contacts the 5S rRNA. Binds to the 5S rRNA independently of L5 and L18.

This is one of the proteins that binds to the 5S RNA in the ribosome where it forms part of the central protuberance. The sequence is that of Large ribosomal subunit protein bL25 from Treponema pallidum subsp. pallidum (strain SS14).